The chain runs to 795 residues: Phenylalanine--tRNA ligase beta subunit (795 aa).

Residues 39-148 (AGEFNGVVVG…ADAPVGKDFR (110 aa)) enclose the tRNA-binding domain. Residues 401–476 (PKLNKVQLRR…RIYGYNSIPN (76 aa)) form the B5 domain. Mg(2+)-binding residues include aspartate 454, aspartate 460, glutamate 463, and glutamate 464. One can recognise an FDX-ACB domain in the interval 701-794 (SKFPANKRDL…LKDRFNAYLR (94 aa)).

It belongs to the phenylalanyl-tRNA synthetase beta subunit family. Type 1 subfamily. As to quaternary structure, tetramer of two alpha and two beta subunits. The cofactor is Mg(2+).

The protein localises to the cytoplasm. The catalysed reaction is tRNA(Phe) + L-phenylalanine + ATP = L-phenylalanyl-tRNA(Phe) + AMP + diphosphate + H(+). The chain is Phenylalanine--tRNA ligase beta subunit from Mannheimia succiniciproducens (strain KCTC 0769BP / MBEL55E).